A 414-amino-acid chain; its full sequence is Putative gustatory receptor 47b (414 aa).

Topologically, residues 1–5 are cytoplasmic; sequence MQRDD. The helical transmembrane segment at 6–26 threads the bilayer; the sequence is GFVYCYGNLYSLLLYWGLVTI. Residues 27 to 40 lie on the Extracellular side of the membrane; sequence RVRSPDRGGAFSNR. A helical membrane pass occupies residues 41 to 61; that stretch reads WTVCYALFTRSFMVICFMATV. Residues 62 to 142 lie on the Cytoplasmic side of the membrane; the sequence is MTKLRDPEMS…QWNYRRARLK (81 aa). Residues 143-163 traverse the membrane as a helical segment; the sequence is YWYGTVIVGFCFFSFSISLIF. Over 164-182 the chain is Extracellular; it reads DTTRCTCGIPSTLLMAFTY. Residues 183–203 form a helical membrane-spanning segment; it reads TLLTSSVGLLGFVHIGIMDFI. Residues 204–249 lie on the Cytoplasmic side of the membrane; sequence RVRLRLVQQLLHQLYQADDSSEVHERIAYLFEMSKRCSFLLAELNG. A helical membrane pass occupies residues 250-270; it reads VFGFAAAAGIFYDFTIMTCFV. The Extracellular portion of the chain corresponds to 271 to 291; it reads YVICQKLLEREPWDPEYVYML. The helical transmembrane segment at 292 to 312 threads the bilayer; it reads LHVAIHTYKVVITSTYGYLLL. Residues 313–364 are Cytoplasmic-facing; it reads REKRNCMHLLSQYSRYFSGQDVARRKTEDFQHWRMHNRQAAMVGSTTLLSVS. The chain crosses the membrane as a helical span at residues 365 to 385; sequence TIYLVYNGMANYVIILVQLLF. Residues 386-414 lie on the Extracellular side of the membrane; sequence QQQQIKDHQLTSGKDVDIVGPMGPITHMD.

The protein belongs to the insect chemoreceptor superfamily. Gustatory receptor (GR) family. Gr57a subfamily. In terms of tissue distribution, expressed in neurons of the terminal external chemosensory organ of larvae.

It localises to the cell membrane. Its function is as follows. Probable gustatory receptor which mediates acceptance or avoidance behavior, depending on its substrates. The chain is Putative gustatory receptor 47b (Gr47b) from Drosophila melanogaster (Fruit fly).